The sequence spans 321 residues: Phospho-N-acetylmuramoyl-pentapeptide-transferase (321 aa).

Transmembrane regions (helical) follow at residues 1 to 21 (MIFV…PVLI), 50 to 70 (MGGL…IIFV), 76 to 96 (IILL…DDYI), 112 to 132 (FLAQ…FHLV), 140 to 160 (IPFT…IVFW), 176 to 196 (GLAT…SFVL), 200 to 220 (AIGI…PYNI), 225 to 245 (VFMG…ISIM), 250 to 270 (LSLI…MLQV), and 300 to 320 (VVTV…WIGV).

It belongs to the glycosyltransferase 4 family. MraY subfamily. The cofactor is Mg(2+).

It is found in the cell membrane. It catalyses the reaction UDP-N-acetyl-alpha-D-muramoyl-L-alanyl-gamma-D-glutamyl-L-lysyl-D-alanyl-D-alanine + di-trans,octa-cis-undecaprenyl phosphate = Mur2Ac(oyl-L-Ala-gamma-D-Glu-L-Lys-D-Ala-D-Ala)-di-trans,octa-cis-undecaprenyl diphosphate + UMP. Its pathway is cell wall biogenesis; peptidoglycan biosynthesis. In terms of biological role, catalyzes the initial step of the lipid cycle reactions in the biosynthesis of the cell wall peptidoglycan: transfers peptidoglycan precursor phospho-MurNAc-pentapeptide from UDP-MurNAc-pentapeptide onto the lipid carrier undecaprenyl phosphate, yielding undecaprenyl-pyrophosphoryl-MurNAc-pentapeptide, known as lipid I. The protein is Phospho-N-acetylmuramoyl-pentapeptide-transferase of Staphylococcus aureus (strain Mu50 / ATCC 700699).